The following is a 104-amino-acid chain: Large ribosomal subunit protein uL24 (104 aa).

Belongs to the universal ribosomal protein uL24 family. In terms of assembly, part of the 50S ribosomal subunit.

Its function is as follows. One of two assembly initiator proteins, it binds directly to the 5'-end of the 23S rRNA, where it nucleates assembly of the 50S subunit. In terms of biological role, one of the proteins that surrounds the polypeptide exit tunnel on the outside of the subunit. This chain is Large ribosomal subunit protein uL24, found in Shewanella oneidensis (strain ATCC 700550 / JCM 31522 / CIP 106686 / LMG 19005 / NCIMB 14063 / MR-1).